The sequence spans 181 residues: Inner membrane-spanning protein YciB (181 aa).

5 helical membrane-spanning segments follow: residues 10-30, 50-70, 72-92, 118-138, and 148-168; these read LIIF…GALI, MHLI…VFHD, AFIK…LGVS, VTWY…YVAF, and FKVF…VFYL.

This sequence belongs to the YciB family.

The protein resides in the cell inner membrane. Functionally, plays a role in cell envelope biogenesis, maintenance of cell envelope integrity and membrane homeostasis. The sequence is that of Inner membrane-spanning protein YciB from Shewanella sp. (strain MR-7).